The sequence spans 77 residues: Protein AC145 (77 aa).

Its subcellular location is the host nucleus. It is found in the virion. In terms of biological role, plays a role in primary oral infection of the host. In Autographa californica nuclear polyhedrosis virus (AcMNPV), this protein is Protein AC145.